The chain runs to 130 residues: Protein ApaG (130 aa).

One can recognise an ApaG domain in the interval 3 to 127; it reads STITRDIQIT…FSLDSPFSRQ (125 aa).

The polypeptide is Protein ApaG (Beijerinckia indica subsp. indica (strain ATCC 9039 / DSM 1715 / NCIMB 8712)).